Reading from the N-terminus, the 134-residue chain is Putative membrane protein insertion efficiency factor (134 aa).

It belongs to the UPF0161 family.

It is found in the cell inner membrane. Functionally, could be involved in insertion of integral membrane proteins into the membrane. The chain is Putative membrane protein insertion efficiency factor from Rhizobium etli (strain ATCC 51251 / DSM 11541 / JCM 21823 / NBRC 15573 / CFN 42).